Consider the following 276-residue polypeptide: Aldo-keto reductase Mjls_1919 (276 aa).

Catalysis depends on Y50, which acts as the Proton donor. 8 residues coordinate NADPH: L190, I228, K230, S231, V232, R236, S239, and N240.

It belongs to the aldo/keto reductase family.

The polypeptide is Aldo-keto reductase Mjls_1919 (Mycobacterium sp. (strain JLS)).